A 95-amino-acid chain; its full sequence is Large ribosomal subunit protein bL27 (95 aa).

Positions 1 to 9 (MLNMNLQFF) are excised as a propeptide.

It belongs to the bacterial ribosomal protein bL27 family. In terms of processing, the N-terminus is cleaved by ribosomal processing cysteine protease Prp.

In Agathobacter rectalis (strain ATCC 33656 / DSM 3377 / JCM 17463 / KCTC 5835 / VPI 0990) (Eubacterium rectale), this protein is Large ribosomal subunit protein bL27.